The sequence spans 444 residues: Phosphoglucosamine mutase (444 aa).

Catalysis depends on Ser100, which acts as the Phosphoserine intermediate. Ser100, Asp234, Asp236, and Asp238 together coordinate Mg(2+). Position 100 is a phosphoserine (Ser100).

It belongs to the phosphohexose mutase family. Requires Mg(2+) as cofactor. Post-translationally, activated by phosphorylation.

It carries out the reaction alpha-D-glucosamine 1-phosphate = D-glucosamine 6-phosphate. Functionally, catalyzes the conversion of glucosamine-6-phosphate to glucosamine-1-phosphate. This chain is Phosphoglucosamine mutase, found in Rubrobacter xylanophilus (strain DSM 9941 / JCM 11954 / NBRC 16129 / PRD-1).